The chain runs to 503 residues: NAD(P)H-quinone oxidoreductase chain 4, chloroplastic (503 aa).

The next 13 membrane-spanning stretches (helical) occupy residues 4–24, 37–57, 87–107, 134–154, 167–187, 208–228, 242–262, 272–292, 305–325, 330–350, 386–406, 416–436, and 462–482; these read FPWL…IFFL, ICIC…HFQL, IGPT…AWPV, LLLF…LLSM, FILY…GMGL, ALEI…SPII, HYST…YGLV, AHSI…IYAA, IAYS…SITD, GAIL…FLAG, LALP…GIIT, ILIT…SLSM, and LFVS…PDFV.

The protein belongs to the complex I subunit 4 family.

Its subcellular location is the plastid. The protein resides in the chloroplast thylakoid membrane. The enzyme catalyses a plastoquinone + NADH + (n+1) H(+)(in) = a plastoquinol + NAD(+) + n H(+)(out). It carries out the reaction a plastoquinone + NADPH + (n+1) H(+)(in) = a plastoquinol + NADP(+) + n H(+)(out). In Drimys granadensis, this protein is NAD(P)H-quinone oxidoreductase chain 4, chloroplastic.